The following is a 202-amino-acid chain: Glycerol-3-phosphate acyltransferase (202 aa).

6 consecutive transmembrane segments (helical) span residues 2–22 (MIIV…GFVI), 54–74 (FLVT…PLWL), 85–105 (FFTN…YPVY), 120–140 (VVLG…FIIL), 141–161 (KIFK…VIGS), and 162–182 (LIIQ…ILII).

It belongs to the PlsY family. Probably interacts with PlsX.

It localises to the cell membrane. The catalysed reaction is an acyl phosphate + sn-glycerol 3-phosphate = a 1-acyl-sn-glycero-3-phosphate + phosphate. It participates in lipid metabolism; phospholipid metabolism. Its function is as follows. Catalyzes the transfer of an acyl group from acyl-phosphate (acyl-PO(4)) to glycerol-3-phosphate (G3P) to form lysophosphatidic acid (LPA). This enzyme utilizes acyl-phosphate as fatty acyl donor, but not acyl-CoA or acyl-ACP. This Staphylococcus aureus (strain bovine RF122 / ET3-1) protein is Glycerol-3-phosphate acyltransferase.